Consider the following 764-residue polypeptide: Cyclin-F (764 aa).

The Nuclear localization signal 1 motif lies at 19–27; sequence RKRVRKRAS. An F-box domain is found at 28–75; the sequence is AVSLLSLPEELLVFVLQCLSAEDLLSVRAVHSHLCDIIDTNASIWARV. In terms of domain architecture, Cyclin N-terminal spans 307–404; it reads TKRYILVDWL…EVISVLDGKI (98 aa). Positions 309–312 match the D box 1 motif; sequence RYIL. A Nuclear localization signal 2 motif is present at residues 570-575; that stretch reads SSKRRR. Residues 583-738 are PEST; it reads RGAFVATPTA…PSQRIRRQVK (156 aa). The segment at 662–754 is disordered; that stretch reads CEEDEQEPPT…HSAGEAEQED (93 aa). Residues 682 to 692 are compositionally biased toward low complexity; sequence SSSSTSSSSSS. Over residues 702 to 722 the composition is skewed to polar residues; it reads SGYSSIQSFPSPTGSSALVSP. A compositionally biased stretch (basic residues) spans 732 to 742; that stretch reads RIRRQVKRKNT.

The protein belongs to the cyclin family. Cyclin AB subfamily. In terms of assembly, component of the SCF(CCNF) complex. Expressed in the brain.

It is found in the nucleus. The protein resides in the cytoplasm. The protein localises to the perinuclear region. Its subcellular location is the cytoskeleton. It localises to the microtubule organizing center. It is found in the centrosome. The protein resides in the centriole. In terms of biological role, substrate recognition component of a SCF (SKP1-CUL1-F-box protein) E3 ubiquitin-protein ligase complex which mediates the ubiquitination and subsequent proteasomal degradation of target proteins. The SCF(CCNF) E3 ubiquitin-protein ligase complex is an integral component of the ubiquitin proteasome system (UPS) and links proteasome degradation to the cell cycle. Mediates the substrate recognition and the proteasomal degradation of various target proteins during G2 phase involved in the regulation of cell cycle progression and in the maintenance of genome stability. May play a role in motor neuron development and axonal outgrowth. The chain is Cyclin-F (ccnf) from Danio rerio (Zebrafish).